A 1379-amino-acid chain; its full sequence is DNA-directed RNA polymerase subunit beta (1379 aa).

Belongs to the RNA polymerase beta chain family. As to quaternary structure, the RNAP catalytic core consists of 2 alpha, 1 beta, 1 beta' and 1 omega subunit. When a sigma factor is associated with the core the holoenzyme is formed, which can initiate transcription.

It catalyses the reaction RNA(n) + a ribonucleoside 5'-triphosphate = RNA(n+1) + diphosphate. DNA-dependent RNA polymerase catalyzes the transcription of DNA into RNA using the four ribonucleoside triphosphates as substrates. This Allorhizobium ampelinum (strain ATCC BAA-846 / DSM 112012 / S4) (Agrobacterium vitis (strain S4)) protein is DNA-directed RNA polymerase subunit beta.